The following is a 297-amino-acid chain: Probable endonuclease 4 (297 aa).

Residues His-69, His-110, Glu-145, Asp-179, His-182, His-214, Asp-227, His-229, and Glu-259 each coordinate Zn(2+).

It belongs to the AP endonuclease 2 family. Requires Zn(2+) as cofactor.

It carries out the reaction Endonucleolytic cleavage to 5'-phosphooligonucleotide end-products.. Its function is as follows. Endonuclease IV plays a role in DNA repair. It cleaves phosphodiester bonds at apurinic or apyrimidinic (AP) sites, generating a 3'-hydroxyl group and a 5'-terminal sugar phosphate. The chain is Probable endonuclease 4 from Bacillus velezensis (strain DSM 23117 / BGSC 10A6 / LMG 26770 / FZB42) (Bacillus amyloliquefaciens subsp. plantarum).